A 104-amino-acid chain; its full sequence is Co-chaperonin GroES 2 (104 aa).

Belongs to the GroES chaperonin family. Heptamer of 7 subunits arranged in a ring. Interacts with the chaperonin GroEL.

It is found in the cytoplasm. Together with the chaperonin GroEL, plays an essential role in assisting protein folding. The GroEL-GroES system forms a nano-cage that allows encapsulation of the non-native substrate proteins and provides a physical environment optimized to promote and accelerate protein folding. GroES binds to the apical surface of the GroEL ring, thereby capping the opening of the GroEL channel. In Mesorhizobium japonicum (strain LMG 29417 / CECT 9101 / MAFF 303099) (Mesorhizobium loti (strain MAFF 303099)), this protein is Co-chaperonin GroES 2.